The chain runs to 108 residues: UPF0145 protein Fnod_0426 (108 aa).

It belongs to the UPF0145 family.

This is UPF0145 protein Fnod_0426 from Fervidobacterium nodosum (strain ATCC 35602 / DSM 5306 / Rt17-B1).